The primary structure comprises 173 residues: Inner membrane protein YbcI (173 aa).

Topologically, residues Met-1–Leu-12 are cytoplasmic. The helical transmembrane segment at Cys-13 to Ala-35 threads the bilayer. Topologically, residues Met-36 to Val-54 are periplasmic. A helical membrane pass occupies residues Phe-55 to Ile-77. Over Gly-78–Arg-83 the chain is Cytoplasmic. Residues Ala-84–Leu-103 form a helical membrane-spanning segment. The Periplasmic portion of the chain corresponds to Asp-104–His-147. The helical transmembrane segment at Gln-148–Trp-170 threads the bilayer. Over Arg-171–Arg-173 the chain is Cytoplasmic.

The protein resides in the cell inner membrane. This is Inner membrane protein YbcI (ybcI) from Escherichia coli (strain K12).